The chain runs to 392 residues: Cell division protein DivIB (392 aa).

The disordered stretch occupies residues 1–88 (MSEKDNNLTP…TQSSEAPIEN (88 aa)). Topologically, residues 1 to 131 (MSEKDNNLTP…KGSAPLLKKM (131 aa)) are cytoplasmic. Positions 14 to 32 (KHLEYQKRKAEEAKKEKKA) are enriched in basic and acidic residues. Residues 58-76 (TRDEAESAELLEEGFETNN) are compositionally biased toward acidic residues. Residues 132-152 (WPALAVVVLVFVGSLYLISPL) traverse the membrane as a helical segment. Positions 153–224 (SKISTFSVSG…NRFEAIVKEH (72 aa)) constitute a POTRA domain. Topologically, residues 153-392 (SKISTFSVSG…TAQSTTTSSN (240 aa)) are extracellular. A disordered region spans residues 368–392 (ISAQNAKKTDASSENTAQSTTTSSN).

Belongs to the FtsQ/DivIB family. DivIB subfamily.

The protein localises to the cell membrane. In terms of biological role, cell division protein that may be involved in stabilizing or promoting the assembly of the division complex. The chain is Cell division protein DivIB from Lactococcus lactis subsp. lactis (strain KF147).